The following is a 401-amino-acid chain: Stearoyl-[acyl-carrier-protein] 9-desaturase 3, chloroplastic (401 aa).

The tract at residues 1–31 (MSMALLLTSPAMKQKPAVITSPRRGSSPSRR) is disordered. The N-terminal 35 residues, 1-35 (MSMALLLTSPAMKQKPAVITSPRRGSSPSRRLRVS), are a transit peptide targeting the chloroplast. 6 residues coordinate Fe cation: Glu-140, Glu-178, His-181, Glu-231, Glu-264, and His-267.

It belongs to the fatty acid desaturase type 2 family. In terms of assembly, homodimer. Requires Fe(2+) as cofactor. As to expression, ubiquitously expressed with a preference in leaves, flowers and stems.

It localises to the plastid. The protein resides in the chloroplast. It catalyses the reaction octadecanoyl-[ACP] + 2 reduced [2Fe-2S]-[ferredoxin] + O2 + 2 H(+) = (9Z)-octadecenoyl-[ACP] + 2 oxidized [2Fe-2S]-[ferredoxin] + 2 H2O. The protein operates within lipid metabolism; fatty acid metabolism. Its function is as follows. Converts stearoyl-ACP to oleoyl-ACP by introduction of a cis double bond between carbons 9 and 10 of the acyl chain. Also able to convert palmitoyl-ACP to palmitoleoyl-ACP at the C9 position. Exhibits delta-9 palmitoyl-[acyl-carrier-protein] desaturase (PAD) activity. Involved in omega-7 monounsaturated fatty acid biosynthesis, especially in the endosperm oil. The sequence is that of Stearoyl-[acyl-carrier-protein] 9-desaturase 3, chloroplastic (S-ACP-DES3) from Arabidopsis thaliana (Mouse-ear cress).